Here is a 239-residue protein sequence, read N- to C-terminus: MAKLGLNVDHVATVRQARGGMEPDPVTAAALGELAGAEGITIHLREDRRHIQDRDLEILRRTVKTKLNLEMAATQEMVRIALRTKPEQVTLVPEKRQELTTEGGLDVILNLKAITDAVKRLRDGGIVVSLFVDPDQEQIKAANKSGADYIEIHTGAYADAPDWPSQKRQLEEIDAAIKLASKVGMGVNAGHGINYVNIKPLAALGGIEEYNIGHSIMARAILVGMDRAVKDMVELIKYA.

Asparagine 7 contacts 3-amino-2-oxopropyl phosphate. 9-10 contacts 1-deoxy-D-xylulose 5-phosphate; that stretch reads DH. Arginine 18 contributes to the 3-amino-2-oxopropyl phosphate binding site. Histidine 43 serves as the catalytic Proton acceptor. 1-deoxy-D-xylulose 5-phosphate-binding residues include arginine 45 and histidine 50. Glutamate 70 acts as the Proton acceptor in catalysis. Position 100 (threonine 100) interacts with 1-deoxy-D-xylulose 5-phosphate. The Proton donor role is filled by histidine 191. Residues glycine 192 and 213–214 contribute to the 3-amino-2-oxopropyl phosphate site; that span reads GH.

This sequence belongs to the PNP synthase family. As to quaternary structure, homooctamer; tetramer of dimers.

The protein resides in the cytoplasm. The enzyme catalyses 3-amino-2-oxopropyl phosphate + 1-deoxy-D-xylulose 5-phosphate = pyridoxine 5'-phosphate + phosphate + 2 H2O + H(+). The protein operates within cofactor biosynthesis; pyridoxine 5'-phosphate biosynthesis; pyridoxine 5'-phosphate from D-erythrose 4-phosphate: step 5/5. In terms of biological role, catalyzes the complicated ring closure reaction between the two acyclic compounds 1-deoxy-D-xylulose-5-phosphate (DXP) and 3-amino-2-oxopropyl phosphate (1-amino-acetone-3-phosphate or AAP) to form pyridoxine 5'-phosphate (PNP) and inorganic phosphate. The polypeptide is Pyridoxine 5'-phosphate synthase (Pelobacter propionicus (strain DSM 2379 / NBRC 103807 / OttBd1)).